The following is a 268-amino-acid chain: Phosphatidylglycerol--prolipoprotein diacylglyceryl transferase (268 aa).

Transmembrane regions (helical) follow at residues 21–41 (WYGI…GRFA), 54–74 (FAII…VFVL), 93–113 (GLAI…YLPM), 122–142 (ADVV…GNFF), 173–193 (VMHP…GILL), 203–223 (GVVF…IESI), and 236–256 (VAQL…AWFL). R137 lines the a 1,2-diacyl-sn-glycero-3-phospho-(1'-sn-glycerol) pocket.

The protein belongs to the Lgt family.

The protein resides in the cell membrane. It carries out the reaction L-cysteinyl-[prolipoprotein] + a 1,2-diacyl-sn-glycero-3-phospho-(1'-sn-glycerol) = an S-1,2-diacyl-sn-glyceryl-L-cysteinyl-[prolipoprotein] + sn-glycerol 1-phosphate + H(+). Its pathway is protein modification; lipoprotein biosynthesis (diacylglyceryl transfer). In terms of biological role, catalyzes the transfer of the diacylglyceryl group from phosphatidylglycerol to the sulfhydryl group of the N-terminal cysteine of a prolipoprotein, the first step in the formation of mature lipoproteins. The sequence is that of Phosphatidylglycerol--prolipoprotein diacylglyceryl transferase from Symbiobacterium thermophilum (strain DSM 24528 / JCM 14929 / IAM 14863 / T).